A 555-amino-acid chain; its full sequence is MNDTKDNKVYSSARHSKYWQQLQTLAESPWSLAALFAQDNTRTQHFSMQAGALYMDYSKQCIDDAVLENLLNLANSCELAARIQSLLQGAMVNTSEERAALHTALRLPATASLQLDTQDVVADVHQSLLQVERLSERVRSGTWRGFSGQAITDVVNIGVGGSDLGPLMATTALDEWADTCVEVHFVSNMDGTQLDNLLKHLNPETTLFIISSKSFGTVDTLSNAKTALSWLLATAKLRAGTEDSVRRRHFIGISANGQKMSAWGIHPEHQLQLWEWVGGRFSLWSAIGLAIAIRIGMSGFKELLAGAHSMDDHFAQADFAKNVPVLLGLIAVWNSTFLQVNAHTVLPYDGRLSYLPSYLTQLEMESNGKSVTQHGDRIDYDTCPILWGEIGSNAQHAFYQLLHQGTQQVSCDFIACVRRYSDEAKNTPLQQQHELSLANCLAQSRVLAFGNAAIAESDGQVACDADKYKYYRGNQPSTTLLLDELTPHSLGALIALYEHKVYVMASIWDINPFDQWGVEMGKQMAESVHDAMQQERGAQFDTSTNQLLKHIKELS.

Glutamate 365 acts as the Proton donor in catalysis. Catalysis depends on residues histidine 396 and lysine 522.

Belongs to the GPI family.

Its subcellular location is the cytoplasm. The enzyme catalyses alpha-D-glucose 6-phosphate = beta-D-fructose 6-phosphate. It functions in the pathway carbohydrate biosynthesis; gluconeogenesis. It participates in carbohydrate degradation; glycolysis; D-glyceraldehyde 3-phosphate and glycerone phosphate from D-glucose: step 2/4. Functionally, catalyzes the reversible isomerization of glucose-6-phosphate to fructose-6-phosphate. This chain is Glucose-6-phosphate isomerase, found in Psychrobacter arcticus (strain DSM 17307 / VKM B-2377 / 273-4).